The primary structure comprises 461 residues: UDP-glycosyltransferase 88B1 (461 aa).

Residues serine 278, 340–341, 358–366, and 380–383 contribute to the UDP-alpha-D-glucose site; these read WA, HCGWNSSLE, and YAEQ.

It belongs to the UDP-glycosyltransferase family.

In terms of biological role, may glycosylate diterpenes or flavonols in leaves. This is UDP-glycosyltransferase 88B1 from Stevia rebaudiana (Stevia).